A 914-amino-acid polypeptide reads, in one-letter code: TRPM8 channel-associated factor 2 (914 aa).

The Peptidase M60 domain occupies 541–840 (DAWMSTGLNL…TYLQLQEAFG (300 aa)).

The protein belongs to the TCAF family. As to quaternary structure, interacts with TRPM8 (via N-terminus and C-terminus domains); the interaction inhibits TRPM8 channel activity. Interacts with TRPV6.

The protein localises to the cell membrane. In terms of biological role, negatively regulates the plasma membrane cation channel TRPM8 activity. Involved in the recruitment of TRPM8 to the cell surface. Promotes prostate cancer cell migration stimulation in a TRPM8-dependent manner. This Bos taurus (Bovine) protein is TRPM8 channel-associated factor 2.